We begin with the raw amino-acid sequence, 148 residues long: MKRVLIIHGPNVNLTGKREKEVYGDINYEEINNLIKREAAKLDIAVKIQQSNSEGEIINLIHSAENNFDAIIINPAAYTHYSLAIMDAIAAVSVPVIEVHISNIFGREDYRKTSVTASKCKGVITGFGPYSYVLALNAVKLLEDSIGG.

Tyr-23 serves as the catalytic Proton acceptor. Substrate-binding residues include Asn-74, His-80, and Asp-87. The Proton donor role is filled by His-100. Substrate is bound by residues 101–102 (IS) and Arg-111.

The protein belongs to the type-II 3-dehydroquinase family. Homododecamer.

The enzyme catalyses 3-dehydroquinate = 3-dehydroshikimate + H2O. It functions in the pathway metabolic intermediate biosynthesis; chorismate biosynthesis; chorismate from D-erythrose 4-phosphate and phosphoenolpyruvate: step 3/7. In terms of biological role, catalyzes a trans-dehydration via an enolate intermediate. In Thermoanaerobacter pseudethanolicus (strain ATCC 33223 / 39E) (Clostridium thermohydrosulfuricum), this protein is 3-dehydroquinate dehydratase.